Reading from the N-terminus, the 183-residue chain is ATP synthase subunit delta (183 aa).

It belongs to the ATPase delta chain family. F-type ATPases have 2 components, F(1) - the catalytic core - and F(0) - the membrane proton channel. F(1) has five subunits: alpha(3), beta(3), gamma(1), delta(1), epsilon(1). F(0) has three main subunits: a(1), b(2) and c(10-14). The alpha and beta chains form an alternating ring which encloses part of the gamma chain. F(1) is attached to F(0) by a central stalk formed by the gamma and epsilon chains, while a peripheral stalk is formed by the delta and b chains.

It is found in the cell inner membrane. Functionally, f(1)F(0) ATP synthase produces ATP from ADP in the presence of a proton or sodium gradient. F-type ATPases consist of two structural domains, F(1) containing the extramembraneous catalytic core and F(0) containing the membrane proton channel, linked together by a central stalk and a peripheral stalk. During catalysis, ATP synthesis in the catalytic domain of F(1) is coupled via a rotary mechanism of the central stalk subunits to proton translocation. This protein is part of the stalk that links CF(0) to CF(1). It either transmits conformational changes from CF(0) to CF(1) or is implicated in proton conduction. The sequence is that of ATP synthase subunit delta from Desulfosudis oleivorans (strain DSM 6200 / JCM 39069 / Hxd3) (Desulfococcus oleovorans).